Consider the following 538-residue polypeptide: Phosphoenolpyruvate carboxykinase (ATP) (538 aa).

Arginine 64 serves as a coordination point for substrate. The Ca(2+) site is built by asparagine 149 and phenylalanine 151. The substrate site is built by tyrosine 206 and lysine 212. Residues lysine 212, histidine 231, and 247–255 (GLSGTGKTT) each bind ATP. Residues lysine 212 and histidine 231 each coordinate Mn(2+). Residue aspartate 268 coordinates Mn(2+). ATP-binding positions include glutamate 296, arginine 332, 447–448 (RI), and threonine 453. A substrate-binding site is contributed by arginine 332.

The protein belongs to the phosphoenolpyruvate carboxykinase (ATP) family. Monomer. Mn(2+) serves as cofactor.

The protein localises to the cytoplasm. The catalysed reaction is oxaloacetate + ATP = phosphoenolpyruvate + ADP + CO2. The protein operates within carbohydrate biosynthesis; gluconeogenesis. Allosterically activated by calcium. In terms of biological role, involved in the gluconeogenesis. Catalyzes the conversion of oxaloacetate (OAA) to phosphoenolpyruvate (PEP) through direct phosphoryl transfer between the nucleoside triphosphate and OAA. In Salmonella typhimurium (strain LT2 / SGSC1412 / ATCC 700720), this protein is Phosphoenolpyruvate carboxykinase (ATP).